The chain runs to 201 residues: Histidine biosynthesis bifunctional protein HisIE (201 aa).

The interval 1–111 (MKINWQKVDN…EKTTQPDWIF (111 aa)) is phosphoribosyl-AMP cyclohydrolase. A phosphoribosyl-ATP pyrophosphohydrolase region spans residues 112–201 (LSKLERLIAS…IHKLKERHTK (90 aa)).

It in the N-terminal section; belongs to the PRA-CH family. In the C-terminal section; belongs to the PRA-PH family.

It is found in the cytoplasm. It carries out the reaction 1-(5-phospho-beta-D-ribosyl)-ATP + H2O = 1-(5-phospho-beta-D-ribosyl)-5'-AMP + diphosphate + H(+). The enzyme catalyses 1-(5-phospho-beta-D-ribosyl)-5'-AMP + H2O = 1-(5-phospho-beta-D-ribosyl)-5-[(5-phospho-beta-D-ribosylamino)methylideneamino]imidazole-4-carboxamide. It functions in the pathway amino-acid biosynthesis; L-histidine biosynthesis; L-histidine from 5-phospho-alpha-D-ribose 1-diphosphate: step 2/9. Its pathway is amino-acid biosynthesis; L-histidine biosynthesis; L-histidine from 5-phospho-alpha-D-ribose 1-diphosphate: step 3/9. The chain is Histidine biosynthesis bifunctional protein HisIE (hisI) from Pasteurella multocida (strain Pm70).